The primary structure comprises 524 residues: Gamma-taxilin (524 aa).

The segment covering 1–10 (MATRLEEVTR) has biased composition (basic and acidic residues). 2 disordered regions span residues 1–37 (MATR…KFEI) and 64–86 (LQHQ…DEGS). Omega-N-methylarginine occurs at positions 12 and 24. A phosphoserine mark is found at S79, S86, and S97. Residues 106–115 (REEIPGREAR) are compositionally biased toward basic and acidic residues. The disordered stretch occupies residues 106-130 (REEIPGREARTGPPDGQQDSECSRN). The stretch at 153–465 (EEKLAALCKK…KEQVSIKAAD (313 aa)) forms a coiled coil. Residue Y283 is modified to Phosphotyrosine. Residues 501-524 (VCEKSAAQKPSSSGSPAQGIESVD) form a disordered region. Phosphoserine is present on S512.

This sequence belongs to the taxilin family. In terms of assembly, binds to the C-terminal coiled coil region of syntaxin family members STX1A, STX3A and STX4A. Forms a heterodimer with ATF4 in osteoblasts.

The protein localises to the nucleus membrane. It is found in the cytoplasm. The protein resides in the cytosol. Its function is as follows. May be involved in intracellular vesicle traffic. Inhibits ATF4-mediated transcription, possibly by dimerizing with ATF4 to form inactive dimers that cannot bind DNA. May be involved in regulating bone mass density through an ATF4-dependent pathway. May be involved in cell cycle progression. This Mus musculus (Mouse) protein is Gamma-taxilin (Txlng).